The chain runs to 1940 residues: Myosin-13 (1940 aa).

The 50-residue stretch at 33 to 82 (DSKKACFAMDDKEMYVKGMIQSRENDKVTVKTLDDRTLTLNSDQVFPMNP) folds into the Myosin N-terminal SH3-like domain. The 697-residue stretch at 86–782 (DKIEDMAMMT…LLGLLEEMRD (697 aa)) folds into the Myosin motor domain. Position 130 is an N6,N6,N6-trimethyllysine (Lys-130). 179-186 (GESGAGKT) is a binding site for ATP. 2 actin-binding regions span residues 659–681 (LNKL…IPNE) and 761–775 (RFGH…GLLG). The 30-residue stretch at 785-814 (LVTLMTRTQAICRGYLMRVEFKKMMERRES) folds into the IQ domain. Positions 843 to 1940 (LLKSAEAERE…RDVGAQKMEE (1098 aa)) form a coiled coil. The interval 1886 to 1940 (RQAEEAEEQANTQMSKCRRVQHELEEAEERADIAESQVNKLRAKSRDVGAQKMEE) is disordered. Positions 1929–1940 (KSRDVGAQKMEE) are enriched in basic and acidic residues.

It belongs to the TRAFAC class myosin-kinesin ATPase superfamily. Myosin family. Muscle myosin is a hexameric protein that consists of 2 heavy chain subunits (MHC), 2 alkali light chain subunits (MLC) and 2 regulatory light chain subunits (MLC-2).

It localises to the cytoplasm. The protein resides in the myofibril. Fast twitching myosin mediating the high-velocity and low-tension contractions of specific striated muscles. This chain is Myosin-13 (MYH13), found in Canis lupus familiaris (Dog).